A 142-amino-acid polypeptide reads, in one-letter code: Large ribosomal subunit protein uL13 (142 aa).

The protein belongs to the universal ribosomal protein uL13 family. Part of the 50S ribosomal subunit.

Its function is as follows. This protein is one of the early assembly proteins of the 50S ribosomal subunit, although it is not seen to bind rRNA by itself. It is important during the early stages of 50S assembly. This Methanosphaera stadtmanae (strain ATCC 43021 / DSM 3091 / JCM 11832 / MCB-3) protein is Large ribosomal subunit protein uL13.